We begin with the raw amino-acid sequence, 372 residues long: Glutamate 5-kinase (372 aa).

Lysine 14 is a binding site for ATP. Serine 54, aspartate 141, and asparagine 153 together coordinate substrate. Residues 173–174 (TD) and 215–221 (TGGMATK) each bind ATP. The PUA domain maps to 280–358 (RGQVVLDTGA…DNIEEILGYD (79 aa)).

This sequence belongs to the glutamate 5-kinase family.

The protein resides in the cytoplasm. The enzyme catalyses L-glutamate + ATP = L-glutamyl 5-phosphate + ADP. It participates in amino-acid biosynthesis; L-proline biosynthesis; L-glutamate 5-semialdehyde from L-glutamate: step 1/2. Catalyzes the transfer of a phosphate group to glutamate to form L-glutamate 5-phosphate. This is Glutamate 5-kinase from Shewanella halifaxensis (strain HAW-EB4).